Here is a 269-residue protein sequence, read N- to C-terminus: Intermembrane phospholipid transport system ATP-binding protein MlaF (269 aa).

In terms of domain architecture, ABC transporter spans 9-245 (VDMRDVSFTR…PDPRVRQFLD (237 aa)). An ATP-binding site is contributed by 41 to 48 (GPSGIGKT).

This sequence belongs to the ABC transporter superfamily. MlaF family. The complex is composed of two ATP-binding proteins (MlaF), two transmembrane proteins (MlaE), two cytoplasmic solute-binding proteins (MlaB) and six periplasmic solute-binding proteins (MlaD).

The protein localises to the cell inner membrane. Part of the ABC transporter complex MlaFEDB, which is involved in a phospholipid transport pathway that maintains lipid asymmetry in the outer membrane by retrograde trafficking of phospholipids from the outer membrane to the inner membrane. Responsible for energy coupling to the transport system. This chain is Intermembrane phospholipid transport system ATP-binding protein MlaF, found in Escherichia coli O157:H7.